The chain runs to 164 residues: Kunitz-type proteinase inhibitor BbCI (164 aa).

This sequence belongs to the protease inhibitor I3 (leguminous Kunitz-type inhibitor) family.

The protein resides in the secreted. In terms of biological role, inhibits T.cruzi cruzipain. This chain is Kunitz-type proteinase inhibitor BbCI, found in Bauhinia bauhinioides (Perlebia bauhinoides).